The chain runs to 248 residues: uncharacterized protein (248 aa).

Transmembrane regions (helical) follow at residues 65-85 (IIIY…QFLT), 105-125 (SITS…ILWY), 126-146 (ISWT…LGFI), 156-176 (LCCF…TLLI), 188-208 (LILN…SDYS), and 222-242 (VIYI…YKYT).

It is found in the cell membrane. This is an uncharacterized protein from Rickettsia prowazekii (strain Madrid E).